Reading from the N-terminus, the 505-residue chain is Cyclic AMP-dependent transcription factor ATF-2 (505 aa).

Residues 1-7 (MKFKLHV) carry the Nuclear export signal 1 (N-NES) motif. The C2H2-type zinc finger occupies 25–49 (FLCTAPGCGQRFTNEDHLAVHKHKH). Residue threonine 52 is modified to Phosphothreonine; by PKC/PRKCH. A Phosphoserine; by VRK1 modification is found at serine 62. Threonine 69 carries the post-translational modification Phosphothreonine; by MAPK11 and MAPK14. Threonine 71 bears the Phosphothreonine; by MAPK1, MAPK3, MAPK11, MAPK12, MAPK14 and PLK3 mark. Residue threonine 73 is modified to Phosphothreonine; by VRK1. Residues serine 90 and serine 112 each carry the phosphoserine modification. Phosphothreonine is present on threonine 116. A Phosphoserine; by PKC/PRKCA and PKC/PRKCB modification is found at serine 121. 2 disordered regions span residues 125 to 155 (EPSV…PLAQ) and 259 to 373 (PGIP…RQKR). Position 136 is a phosphoserine (serine 136). Over residues 282 to 293 (LTQQHPPVTNGD) the composition is skewed to polar residues. Residues 296–299 (KGHG) are essential for its histone acetyltransferase activity. A compositionally biased stretch (low complexity) spans 318–334 (PATSTTETPASPAHTTP). Position 328 is a phosphoserine (serine 328). Serine 340 is subject to Phosphoserine; by PKC/PRKCA and PKC/PRKCB. The span at 346–363 (AANEDPDEKRRKFLERNR) shows a compositional bias: basic and acidic residues. The bZIP domain occupies 352 to 415 (DEKRRKFLER…AQLKQLLLAH (64 aa)). A basic motif region spans residues 354–374 (KRRKFLERNRAAASRCRQKRK). Lysine 357 is subject to N6-acetyllysine. The residue at position 367 (serine 367) is a Phosphoserine; by PKC/PRKCA and PKC/PRKCB. At lysine 374 the chain carries N6-acetyllysine. The leucine-zipper stretch occupies residues 380–408 (LEKKAEDLSSLNGQLQSEVTLLRNEVAQL). The Nuclear export signal 2 (C-NES) signature appears at 405–414 (VAQLKQLLLA). The interval 425 to 472 (KKSGYHTADKDDSSEDISVPSSPHTEAIQHSSVSTSNGVSSTSKAEAV) is disordered. 2 positions are modified to phosphoserine: serine 442 and serine 446. Positions 443–454 (VPSSPHTEAIQH) are enriched in polar residues. The segment covering 455–467 (SSVSTSNGVSSTS) has biased composition (low complexity). Serine 490 and serine 498 each carry phosphoserine; by ATM.

It belongs to the bZIP family. ATF subfamily. In terms of assembly, binds DNA as a dimer and can form a homodimer in the absence of DNA. Can form a heterodimer with JUN. Heterodimerization is essential for its transcriptional activity. Interacts with SMAD3 and SMAD4. Binds through its N-terminal region to UTF1 which acts as a coactivator of ATF2 transcriptional activity. Interacts with the HK1/VDAC1 complex. Interacts with NBN, MRE11, XPO1, KAT5 and CUL3. Post-translationally, phosphorylation of Thr-69 by MAPK14 and MAPK11, and at Thr-71 by MAPK1/ERK2, MAPK3/ERK1, MAPK11, MAPK12 and MAPK14 in response to external stimulus like insulin causes increased transcriptional activity. Phosphorylated by PLK3 following hyperosmotic stress. Also phosphorylated and activated by JNK and CaMK4. ATM-mediated phosphorylation at Ser-490 and Ser-498 stimulates its function in DNA damage response. Phosphorylation at Ser-62, Thr-73 and Ser-121 activates its transcriptional activity. Phosphorylation at Thr-69 or Thr-71 enhances acetylation of histones H2B and H4. Ubiquitously expressed, with more abundant expression in the brain.

It is found in the nucleus. The protein resides in the cytoplasm. The protein localises to the mitochondrion outer membrane. Transcriptional activator which regulates the transcription of various genes, including those involved in anti-apoptosis, cell growth, and DNA damage response. Dependent on its binding partner, binds to CRE (cAMP response element) consensus sequences (5'-TGACGTCA-3') or to AP-1 (activator protein 1) consensus sequences (5'-TGACTCA-3'). In the nucleus, contributes to global transcription and the DNA damage response, in addition to specific transcriptional activities that are related to cell development, proliferation and death. In the cytoplasm, interacts with and perturbs HK1- and VDAC1-containing complexes at the mitochondrial outer membrane, thereby impairing mitochondrial membrane potential, inducing mitochondrial leakage and promoting cell death. The phosphorylated form (mediated by ATM) plays a role in the DNA damage response and is involved in the ionizing radiation (IR)-induced S phase checkpoint control and in the recruitment of the MRN complex into the IR-induced foci (IRIF). Exhibits histone acetyltransferase (HAT) activity which specifically acetylates histones H2B and H4 in vitro. In concert with CUL3 and RBX1, promotes the degradation of KAT5 thereby attenuating its ability to acetylate and activate ATM. Can elicit oncogenic or tumor suppressor activities depending on the tissue or cell type. The sequence is that of Cyclic AMP-dependent transcription factor ATF-2 (ATF2) from Homo sapiens (Human).